The sequence spans 208 residues: Small ribosomal subunit protein uS4 (208 aa).

The region spanning 98 to 158 (RRLDNVVYRL…EKSRGQLRIK (61 aa)) is the S4 RNA-binding domain.

This sequence belongs to the universal ribosomal protein uS4 family. Part of the 30S ribosomal subunit. Contacts protein S5. The interaction surface between S4 and S5 is involved in control of translational fidelity.

One of the primary rRNA binding proteins, it binds directly to 16S rRNA where it nucleates assembly of the body of the 30S subunit. In terms of biological role, with S5 and S12 plays an important role in translational accuracy. The polypeptide is Small ribosomal subunit protein uS4 (Magnetococcus marinus (strain ATCC BAA-1437 / JCM 17883 / MC-1)).